The chain runs to 331 residues: Phosphoenolpyruvate transferase (331 aa).

Asp-63 serves as a coordination point for 7,8-didemethyl-8-hydroxy-5-deazariboflavin.

Belongs to the CofD family. Homodimer. The cofactor is Mg(2+).

It catalyses the reaction enolpyruvoyl-2-diphospho-5'-guanosine + 7,8-didemethyl-8-hydroxy-5-deazariboflavin = dehydro coenzyme F420-0 + GMP + H(+). It participates in cofactor biosynthesis; coenzyme F420 biosynthesis. Its function is as follows. Catalyzes the transfer of the phosphoenolpyruvate moiety from enoylpyruvoyl-2-diphospho-5'-guanosine (EPPG) to 7,8-didemethyl-8-hydroxy-5-deazariboflavin (FO) with the formation of dehydro coenzyme F420-0 and GMP. The protein is Phosphoenolpyruvate transferase of Mycobacterium sp. (strain KMS).